The following is a 292-amino-acid chain: Ubiquinone biosynthesis protein UbiV (292 aa).

Cys-39, Cys-180, Cys-193, and Cys-197 together coordinate [4Fe-4S] cluster.

This sequence belongs to the peptidase U32 family. UbiV subfamily. Forms a heterodimer with UbiU. [4Fe-4S] cluster is required as a cofactor.

The protein operates within cofactor biosynthesis; ubiquinone biosynthesis. Required for O(2)-independent ubiquinone (coenzyme Q) biosynthesis. Together with UbiU, is essential for the C6-hydroxylation reaction in the oxygen-independent ubiquinone biosynthesis pathway. This Escherichia coli (strain K12) protein is Ubiquinone biosynthesis protein UbiV.